The following is a 277-amino-acid chain: Phosphate import ATP-binding protein PstB (277 aa).

Residues 31–272 (LEVPGLNLFY…PAKKQTEDYI (242 aa)) enclose the ABC transporter domain. 63-70 (GPSGCGKS) serves as a coordination point for ATP.

Belongs to the ABC transporter superfamily. Phosphate importer (TC 3.A.1.7) family. The complex is composed of two ATP-binding proteins (PstB), two transmembrane proteins (PstC and PstA) (Potential). PstS is missing in this species.

The protein resides in the cell inner membrane. It carries out the reaction phosphate(out) + ATP + H2O = ADP + 2 phosphate(in) + H(+). Its function is as follows. Part of the ABC transporter complex PstSACB involved in phosphate import. Responsible for energy coupling to the transport system. The polypeptide is Phosphate import ATP-binding protein PstB (Pseudomonas aeruginosa (strain ATCC 15692 / DSM 22644 / CIP 104116 / JCM 14847 / LMG 12228 / 1C / PRS 101 / PAO1)).